Consider the following 1846-residue polypeptide: Insulin-like receptor (1846 aa).

Residues Asn113, Asn180, and Asn364 are each glycosylated (N-linked (GlcNAc...) asparagine). 5 disulfide bridges follow: Cys371–Cys386, Cys393–Cys401, Cys397–Cys410, Cys413–Cys422, and Cys426–Cys438. Asn453 carries an N-linked (GlcNAc...) asparagine glycan. 2 disulfide bridges follow: Cys469-Cys483 and Cys486-Cys490. Residue Asn518 is glycosylated (N-linked (GlcNAc...) asparagine). A disulfide bridge connects residues Cys615 and Cys646. N-linked (GlcNAc...) asparagine glycans are attached at residues Asn652, Asn671, and Asn696. Fibronectin type-III domains lie at 775 to 869 (TPDP…TMMG), 969 to 1067 (KPSS…LKRT), and 1077 to 1179 (LNET…TPGF). The tract at residues 944–980 (EKAENLGKAPKTLGGKKPLIHISKKKPSSSSTTSTPA) is disordered. A compositionally biased stretch (basic residues) spans 961-970 (PLIHISKKKP). Topologically, residues 970–1183 (PSSSSTTSTP…VMTPGFFTVE (214 aa)) are extracellular. Over residues 971–980 (SSSSTTSTPA) the composition is skewed to low complexity. Asn1017, Asn1047, Asn1078, Asn1087, and Asn1093 each carry an N-linked (GlcNAc...) asparagine glycan. The chain crosses the membrane as a helical span at residues 1184–1204 (IILGMLLVFLILMSIAGCIIY). At 1205–1846 (YYIQVRYGKK…IEDNEHHPLV (642 aa)) the chain is on the cytoplasmic side. Positions 1246-1528 (VVLGQQCGEG…LLAAEASPEF (283 aa)) constitute a Protein kinase domain. ATP-binding positions include 1252-1260 (CGEGSFGKV) and Lys1282. Asp1388 (proton acceptor) is an active-site residue. 2 disordered regions span residues 1718-1742 (ISSMDTRRSTGASSSSYGVPQTNWS) and 1769-1826 (QQQQ…IFNG). Residues 1726 to 1742 (STGASSSSYGVPQTNWS) show a composition bias toward polar residues. Low complexity predominate over residues 1808–1821 (YRNNGSPSRNGNSR).

It belongs to the protein kinase superfamily. Tyr protein kinase family. Insulin receptor subfamily. As to quaternary structure, tetramer of 2 alpha and 2 beta chains linked by disulfide bonds. The alpha chains contribute to the formation of the ligand-binding domain, while the beta chains carry the kinase domain. Interacts (via cytoplasmic domain) with shc-1 (PID domain). Interacts (via kinase domain) with daf-18 (via C-terminus). In terms of assembly, interacts with casy-1; promoting axonal localization. It depends on Mg(2+) as a cofactor.

It is found in the membrane. It localises to the cell projection. The protein localises to the axon. The enzyme catalyses L-tyrosyl-[protein] + ATP = O-phospho-L-tyrosyl-[protein] + ADP + H(+). Its activity is regulated as follows. Autophosphorylation activates the kinase activity. Interaction with shc-1 may inhibit its activity. Insulin receptor-like tyrosine kinase which regulates metabolism, controls longevity and prevents developmental arrest at the dauer stage. Binding of INS family members may either stimulate, or antagonize, association of the receptor with downstream mediators such as pdk-1 and age-1. Required for germline progenitor proliferation during larval development. Plays a role in maintaining gonad integrity in a daf-16/FOXO-dependent manner. Required for the response to environmental stimuli such as light, food, pheromone, and temperature. Negatively regulates resistance to UV and oxidative stress. In a daf-16/FOXO-dependent manner, plays a role in regulating the response to white light. Role in immune function and pathogen resistance. Negatively regulates autophagy. Regulates daf-18/PTEN protein levels. Plays a role in controlling seam cell development during the larval stages. In terms of biological role, required for taste avoidance learning in the cell body of ASER gustatory neurons. Its function is as follows. Required for taste avoidance learning in axons of ASER gustatory neurons. In Caenorhabditis elegans, this protein is Insulin-like receptor.